A 277-amino-acid chain; its full sequence is Type II restriction enzyme RsrI (277 aa).

Belongs to the EcoRI type II restriction endonuclease family. In terms of assembly, homodimer. Mg(2+) is required as a cofactor.

The catalysed reaction is Endonucleolytic cleavage of DNA to give specific double-stranded fragments with terminal 5'-phosphates.. Its function is as follows. A P subtype restriction enzyme that recognizes the double-stranded sequence 5'-GAATTC-3' and cleaves after G-1. The sequence is that of Type II restriction enzyme RsrI (rsrIR) from Cereibacter sphaeroides (Rhodobacter sphaeroides).